We begin with the raw amino-acid sequence, 199 residues long: uncharacterized protein (199 aa).

A run of 4 helical transmembrane segments spans residues 35-55 (CELA…IFYD), 57-77 (FVIF…YLEF), 94-114 (LSAA…IFFG), and 131-151 (YYGC…ASFA).

It localises to the membrane. This is an uncharacterized protein from Caenorhabditis elegans.